We begin with the raw amino-acid sequence, 176 residues long: MSITIPYDGSISREPSPSPPPPKANTKNLPTKILSNFLIGLIMIPVAITAFIFILTSLGFTFFFAFYWFLQRNYRHRLRRHRRHEYSDGLSPRCVKRLPQFKYCEPSSEYGGDDCVVCIDGFRQGQWCRKLPRCGHVFHRKCVDLWLIKVSTCPICRDRVYRFEEGRRWRPQGEIF.

Residues 1-26 are disordered; it reads MSITIPYDGSISREPSPSPPPPKANT. The helical transmembrane segment at 37-57 threads the bilayer; it reads FLIGLIMIPVAITAFIFILTS. An RING-type; atypical zinc finger spans residues 115–157; it reads CVVCIDGFRQGQWCRKLPRCGHVFHRKCVDLWLIKVSTCPICR.

It belongs to the RING-type zinc finger family. ATL subfamily.

It is found in the membrane. The enzyme catalyses S-ubiquitinyl-[E2 ubiquitin-conjugating enzyme]-L-cysteine + [acceptor protein]-L-lysine = [E2 ubiquitin-conjugating enzyme]-L-cysteine + N(6)-ubiquitinyl-[acceptor protein]-L-lysine.. It functions in the pathway protein modification; protein ubiquitination. The protein is RING-H2 finger protein ATL14 (ATL14) of Arabidopsis thaliana (Mouse-ear cress).